The sequence spans 315 residues: Tyrosine recombinase XerC (315 aa).

The Core-binding (CB) domain maps to Ala13 to Glu104. In terms of domain architecture, Tyr recombinase spans Ser125–Asp309. Catalysis depends on residues Arg168, Lys193, His261, Arg264, and His287. Tyr296 serves as the catalytic O-(3'-phospho-DNA)-tyrosine intermediate.

It belongs to the 'phage' integrase family. XerC subfamily. Forms a cyclic heterotetrameric complex composed of two molecules of XerC and two molecules of XerD.

It localises to the cytoplasm. Functionally, site-specific tyrosine recombinase, which acts by catalyzing the cutting and rejoining of the recombining DNA molecules. The XerC-XerD complex is essential to convert dimers of the bacterial chromosome into monomers to permit their segregation at cell division. It also contributes to the segregational stability of plasmids. This Brucella melitensis biotype 1 (strain ATCC 23456 / CCUG 17765 / NCTC 10094 / 16M) protein is Tyrosine recombinase XerC.